A 169-amino-acid polypeptide reads, in one-letter code: uncharacterized protein (169 aa).

The protein resides in the mitochondrion. This is an uncharacterized protein from Paramecium tetraurelia.